The chain runs to 896 residues: Chromatin assembly factor 1 subunit A-A (896 aa).

3 disordered regions span residues 1-23 (MPGK…KKMV), 185-377 (TSTS…EEEK), and 552-610 (DSDE…DPEN). A compositionally biased stretch (polar residues) spans 10–21 (VMQSSTKSNTKK). The span at 211–226 (ASVSSSSSPVSLSSPD) shows a compositional bias: low complexity. Positions 227 to 236 (AQTGSQFRNR) are enriched in polar residues. Residues 237 to 246 (SSPSTSTTPT) show a composition bias toward low complexity. Residues 255–284 (SADKNKTKDKDKQRQAEKEERERAKKEARS) are compositionally biased toward basic and acidic residues. Positions 285-302 (AKKKKRQGLLKNLQRKRG) are enriched in basic residues. Residues 308 to 377 (SGKEYKKEKK…EEKRLKEEEK (70 aa)) are compositionally biased toward basic and acidic residues. Acidic residues-rich tracts occupy residues 552 to 563 (DSDEEWEEEEPG), 572 to 586 (ENDD…DDDG), and 595 to 607 (SDDE…ECTD). The segment at 642 to 678 (CVWWDSKASEISLLQKFSACILESPAVDEELAQEISS) is necessary for homodimerization, competence for chromatin assembly. The tract at residues 724 to 743 (SDAAGNESTSPNVTPQTPSN) is disordered. Over residues 729-743 (NESTSPNVTPQTPSN) the composition is skewed to polar residues.

This sequence belongs to the CHAF1A family. As to quaternary structure, homodimer.

Its subcellular location is the nucleus. Functionally, involved in chromatin assembly in DNA replication and DNA repair. This chain is Chromatin assembly factor 1 subunit A-A (chaf1a-a), found in Xenopus laevis (African clawed frog).